We begin with the raw amino-acid sequence, 440 residues long: Transposon Ty1-GR1 Gag polyprotein (440 aa).

The span at 1–16 (MESQQLSQHSHISHGS) shows a compositional bias: low complexity. Disordered stretches follow at residues 1 to 93 (MESQ…MMTQ), 126 to 173 (PQSQ…RPPP), and 352 to 440 (GSRN…PGTY). 3 stretches are compositionally biased toward polar residues: residues 48 to 60 (TKAN…TPAS), 71 to 93 (SPQT…MMTQ), and 127 to 152 (QSQF…GNTF). The segment covering 153–165 (TDSSSADSDMTST) has biased composition (low complexity). The interval 299–401 (NNGIHINNKV…NSKSKTARAH (103 aa)) is RNA-binding. Low complexity predominate over residues 402 to 418 (NVSTSNNSPSTDNDSIS). Phosphoserine is present on S416. The segment covering 419-428 (KSTTEPIQLN) has biased composition (polar residues). Positions 429–440 (NKHDLHLRPGTY) are enriched in basic and acidic residues.

As to quaternary structure, homotrimer.

It localises to the cytoplasm. Its function is as follows. Capsid protein (CA) is the structural component of the virus-like particle (VLP), forming the shell that encapsulates the retrotransposons dimeric RNA genome. The particles are assembled from trimer-clustered units and there are holes in the capsid shells that allow for the diffusion of macromolecules. CA also has nucleocapsid-like chaperone activity, promoting primer tRNA(i)-Met annealing to the multipartite primer-binding site (PBS), dimerization of Ty1 RNA and initiation of reverse transcription. The chain is Transposon Ty1-GR1 Gag polyprotein (TY1A-GR1) from Saccharomyces cerevisiae (strain ATCC 204508 / S288c) (Baker's yeast).